Reading from the N-terminus, the 586-residue chain is Actin-related protein 9 (586 aa).

Positions 141-169 (STPIVDKDADVDPLQRSTPDDTEPNSEEN) are disordered.

This sequence belongs to the actin family. ARP8 subfamily.

This Oryza sativa subsp. japonica (Rice) protein is Actin-related protein 9 (ARP9).